Reading from the N-terminus, the 202-residue chain is MSYLGVGVSPGNVPVYHGTNSKVIDRRVRLAELVLRCVICCLGVLAAVLVGTDTQVKEIFSIQKKARFTDMKALVFLVAANGIAAAYSFVQGVRCVVGMVKGSVLFSKPLAWVIFSGDQMMAYLTMSAVAAAAQSSVFAKLGQPDLQWMKICTMYGKFCNQVGEGIASALLVSVSMVVLSCISAFSLFRLYGGNKGKDGARW.

Residues 1 to 29 (MSYLGVGVSPGNVPVYHGTNSKVIDRRVR) are Cytoplasmic-facing. A helical membrane pass occupies residues 30–50 (LAELVLRCVICCLGVLAAVLV). The Extracellular segment spans residues 51–72 (GTDTQVKEIFSIQKKARFTDMK). Residues 73 to 93 (ALVFLVAANGIAAAYSFVQGV) form a helical membrane-spanning segment. The Cytoplasmic segment spans residues 94 to 109 (RCVVGMVKGSVLFSKP). The chain crosses the membrane as a helical span at residues 110 to 132 (LAWVIFSGDQMMAYLTMSAVAAA). The Extracellular segment spans residues 133-164 (AQSSVFAKLGQPDLQWMKICTMYGKFCNQVGE). The helical transmembrane segment at 165–185 (GIASALLVSVSMVVLSCISAF) threads the bilayer. Residues 186-202 (SLFRLYGGNKGKDGARW) are Cytoplasmic-facing.

Belongs to the Casparian strip membrane proteins (CASP) family. As to quaternary structure, homodimer and heterodimers.

Its subcellular location is the cell membrane. The polypeptide is CASP-like protein 2B1 (Populus trichocarpa (Western balsam poplar)).